A 277-amino-acid polypeptide reads, in one-letter code: Large ribosomal subunit protein uL2 (277 aa).

A disordered region spans residues 199 to 277; sequence DHMNTSIGKA…ILLSRHKRKK (79 aa). Over residues 209–220 the composition is skewed to basic residues; the sequence is GRNRWLGRKPHN.

This sequence belongs to the universal ribosomal protein uL2 family. As to quaternary structure, part of the 50S ribosomal subunit. Forms a bridge to the 30S subunit in the 70S ribosome.

Functionally, one of the primary rRNA binding proteins. Required for association of the 30S and 50S subunits to form the 70S ribosome, for tRNA binding and peptide bond formation. It has been suggested to have peptidyltransferase activity; this is somewhat controversial. Makes several contacts with the 16S rRNA in the 70S ribosome. The chain is Large ribosomal subunit protein uL2 from Bradyrhizobium diazoefficiens (strain JCM 10833 / BCRC 13528 / IAM 13628 / NBRC 14792 / USDA 110).